The sequence spans 227 residues: Phosphoglycolate phosphatase (227 aa).

The active-site Nucleophile is Asp-8. Mg(2+)-binding residues include Asp-8 and Asp-10. Residue Lys-152 coordinates substrate. Mg(2+)-binding residues include Asp-175 and Asp-179.

The protein belongs to the archaeal SPP-like hydrolase family. The cofactor is Mg(2+).

It carries out the reaction 2-phosphoglycolate + H2O = glycolate + phosphate. Its function is as follows. Catalyzes the dephosphorylation of 2-phosphoglycolate. This Halorubrum lacusprofundi (strain ATCC 49239 / DSM 5036 / JCM 8891 / ACAM 34) protein is Phosphoglycolate phosphatase.